We begin with the raw amino-acid sequence, 116 residues long: Probable prefoldin subunit 2 (116 aa).

This sequence belongs to the prefoldin subunit beta family. Heterohexamer of two PFD-alpha type and four PFD-beta type subunits.

Functionally, binds specifically to cytosolic chaperonin (c-CPN) and transfers target proteins to it. Binds to nascent polypeptide chain and promotes folding in an environment in which there are many competing pathways for nonnative proteins. The sequence is that of Probable prefoldin subunit 2 (pfdn2) from Dictyostelium discoideum (Social amoeba).